A 518-amino-acid polypeptide reads, in one-letter code: Crotonobetaine/carnitine--CoA ligase (518 aa).

Belongs to the ATP-dependent AMP-binding enzyme family.

It carries out the reaction 4-(trimethylamino)butanoate + ATP + CoA = 4-(trimethylamino)butanoyl-CoA + AMP + diphosphate. It catalyses the reaction crotonobetaine + ATP + CoA = crotonobetainyl-CoA + AMP + diphosphate. The enzyme catalyses (R)-carnitine + ATP + CoA = (R)-carnitinyl-CoA + AMP + diphosphate. It participates in amine and polyamine metabolism; carnitine metabolism. Catalyzes the transfer of CoA to carnitine, generating the initial carnitinyl-CoA needed for the CaiB reaction cycle. Also has activity toward crotonobetaine and gamma-butyrobetaine. The sequence is that of Crotonobetaine/carnitine--CoA ligase from Proteus sp. (strain LE138).